We begin with the raw amino-acid sequence, 255 residues long: Aliphatic sulfonates import ATP-binding protein SsuB (255 aa).

One can recognise an ABC transporter domain in the interval 12 to 233 (LLLNAVSKHY…RLGSVRLAEL (222 aa)). 44-51 (GRSGGGKS) provides a ligand contact to ATP.

The protein belongs to the ABC transporter superfamily. Aliphatic sulfonates importer (TC 3.A.1.17.2) family. In terms of assembly, the complex is composed of two ATP-binding proteins (SsuB), two transmembrane proteins (SsuC) and a solute-binding protein (SsuA).

It is found in the cell inner membrane. It catalyses the reaction ATP + H2O + aliphatic sulfonate-[sulfonate-binding protein]Side 1 = ADP + phosphate + aliphatic sulfonateSide 2 + [sulfonate-binding protein]Side 1.. Part of the ABC transporter complex SsuABC involved in aliphatic sulfonates import. Responsible for energy coupling to the transport system. The sequence is that of Aliphatic sulfonates import ATP-binding protein SsuB from Escherichia coli O1:K1 / APEC.